A 364-amino-acid chain; its full sequence is Hepatitis A virus cellular receptor 1 (364 aa).

The signal sequence occupies residues 1–20 (MHPQVVILSLILHLADSVAG). In terms of domain architecture, Ig-like V-type spans 21 to 121 (SVKVGGEAGP…WFNDMKITVS (101 aa)). Over 21–295 (SVKVGGEAGP…SLLTANTTKG (275 aa)) the chain is Extracellular. 3 disulfide bridges follow: cysteine 36–cysteine 105, cysteine 46–cysteine 57, and cysteine 52–cysteine 104. N-linked (GlcNAc...) asparagine glycosylation occurs at asparagine 65. 12 repeat units span residues 138–143 (VPTVTT), 144–149 (VRTSTT), 150–155 (VPTTTT), 156–160 (VPMTT), 161–165 (VPTTT), 166–171 (VPTTMS), 172–177 (IPTTTT), 178–183 (VLTTMT), 184–189 (VSTTTS), 190–195 (VPTTTS), 196–201 (IPTTTS), and 202–207 (VPVTTT). The segment at 138–207 (VPTVTTVRTS…TTTSVPVTTT (70 aa)) is 12 X 6 AA approximate tandem repeats of V-P-T-T-T-T]. The interval 216–257 (PLPRQNHEPVATSPSSPQPAETHPTTLQGAIRREPTSSPLYS) is disordered. Residues 227–243 (TSPSSPQPAETHPTTLQ) are compositionally biased toward polar residues. 3 N-linked (GlcNAc...) asparagine glycosylation sites follow: asparagine 263, asparagine 277, and asparagine 291. Residues 296 to 316 (IYAGVCISVLVLLALLGVIIA) form a helical membrane-spanning segment. The Cytoplasmic portion of the chain corresponds to 317–364 (KKYFFKKEVQQLSVSFSSLQIKALQNAVEKEVQAEDNIYIENSLYATD). Glycyl lysine isopeptide (Lys-Gly) (interchain with G-Cter in ubiquitin) cross-links involve residues lysine 338 and lysine 346.

The protein belongs to the immunoglobulin superfamily. TIM family. As to quaternary structure, interacts with STAM. Interacts with SELPLG. In terms of assembly, (Microbial infection) Interacts with hepatitis A virus capsid proteins. (Microbial infection) Interacts with Ebolavirus envelope glycoprotein GP. As to quaternary structure, (Microbial infection) Interacts with Zika virus envelope protein E. Post-translationally, ubiquitinated at two lysine residues Lys-338 and Lys-346 on its cytoplasmic domain. Ubiquitination promotes receptor endocytosis and target receptors for lysosomal degradation and termination of receptor signaling. (Microbial infection) Ubiquitination is required for Dengue virus endocytosis. Widely expressed, with highest levels in kidney and testis. Expressed by activated CD4+ T-cells during the development of helper T-cells responses.

The protein localises to the cell membrane. In terms of biological role, phosphatidylserine receptor that plays an important functional role in regulatory B-cells homeostasis including generation, expansion and suppressor functions. As P-selectin/SELPLG ligand, plays a specialized role in activated but not naive T-cell trafficking during inflammatory responses. Controls thereby T-cell accumulation in the inflamed central nervous system (CNS) and the induction of autoimmune disease. Also regulates expression of various anti-inflammatory cytokines and co-inhibitory ligands including IL10. Acts as a regulator of T-cell proliferation. May play a role in kidney injury and repair. Functionally, (Microbial infection) Acts as a receptor for Hepatitis A virus. (Microbial infection) Acts as a receptor for Ebolavirus and Marburg virus by binding exposed phosphatidyl-serine at the surface of virion membrane. Serves as a dual receptor for Ebolavirus by also interacting with envelope glycoprotein GP. Its function is as follows. (Microbial infection) Acts as a receptor for Dengue virus by binding exposed phosphatidyl-serine at the surface of virion membrane. TIM1 and Dengue virus are co-internalized during virus entry. In terms of biological role, (Microbial infection) Acts as a receptor for Zika virus by binding to envelope protein E. Functionally, (Microbial infection) Plays a positive role in Chikungunya virus cell entry. This is Hepatitis A virus cellular receptor 1 (HAVCR1) from Homo sapiens (Human).